A 115-amino-acid polypeptide reads, in one-letter code: NAD(P)H-quinone oxidoreductase subunit M (115 aa).

It belongs to the complex I NdhM subunit family. NDH-1 can be composed of about 15 different subunits; different subcomplexes with different compositions have been identified which probably have different functions.

It is found in the cellular thylakoid membrane. It catalyses the reaction a plastoquinone + NADH + (n+1) H(+)(in) = a plastoquinol + NAD(+) + n H(+)(out). The catalysed reaction is a plastoquinone + NADPH + (n+1) H(+)(in) = a plastoquinol + NADP(+) + n H(+)(out). NDH-1 shuttles electrons from an unknown electron donor, via FMN and iron-sulfur (Fe-S) centers, to quinones in the respiratory and/or the photosynthetic chain. The immediate electron acceptor for the enzyme in this species is believed to be plastoquinone. Couples the redox reaction to proton translocation, and thus conserves the redox energy in a proton gradient. Cyanobacterial NDH-1 also plays a role in inorganic carbon-concentration. This Prochlorococcus marinus (strain NATL1A) protein is NAD(P)H-quinone oxidoreductase subunit M.